Consider the following 186-residue polypeptide: Ribosome-recycling factor (186 aa).

It belongs to the RRF family.

The protein resides in the cytoplasm. In terms of biological role, responsible for the release of ribosomes from messenger RNA at the termination of protein biosynthesis. May increase the efficiency of translation by recycling ribosomes from one round of translation to another. The protein is Ribosome-recycling factor of Chlorobium luteolum (strain DSM 273 / BCRC 81028 / 2530) (Pelodictyon luteolum).